We begin with the raw amino-acid sequence, 345 residues long: Uroporphyrinogen decarboxylase (345 aa).

Substrate contacts are provided by residues 26–30 (RQAGR), Asp-76, Tyr-151, Ser-205, and His-321.

This sequence belongs to the uroporphyrinogen decarboxylase family. Homodimer.

It localises to the cytoplasm. The enzyme catalyses uroporphyrinogen III + 4 H(+) = coproporphyrinogen III + 4 CO2. Its pathway is porphyrin-containing compound metabolism; protoporphyrin-IX biosynthesis; coproporphyrinogen-III from 5-aminolevulinate: step 4/4. Catalyzes the decarboxylation of four acetate groups of uroporphyrinogen-III to yield coproporphyrinogen-III. The chain is Uroporphyrinogen decarboxylase from Phenylobacterium zucineum (strain HLK1).